The following is a 140-amino-acid chain: Nucleoside diphosphate kinase (140 aa).

ATP-binding residues include Lys11, Phe59, Arg87, Thr93, Arg104, and Asn114. The active-site Pros-phosphohistidine intermediate is His117.

Belongs to the NDK family. Homotetramer. The cofactor is Mg(2+).

The protein resides in the cytoplasm. The enzyme catalyses a 2'-deoxyribonucleoside 5'-diphosphate + ATP = a 2'-deoxyribonucleoside 5'-triphosphate + ADP. It carries out the reaction a ribonucleoside 5'-diphosphate + ATP = a ribonucleoside 5'-triphosphate + ADP. Its function is as follows. Major role in the synthesis of nucleoside triphosphates other than ATP. The ATP gamma phosphate is transferred to the NDP beta phosphate via a ping-pong mechanism, using a phosphorylated active-site intermediate. The protein is Nucleoside diphosphate kinase of Mesorhizobium japonicum (strain LMG 29417 / CECT 9101 / MAFF 303099) (Mesorhizobium loti (strain MAFF 303099)).